We begin with the raw amino-acid sequence, 233 residues long: Biosynthetic peptidoglycan transglycosylase (233 aa).

The helical transmembrane segment at 8–28 threads the bilayer; the sequence is LIALPVGIFIFFNAYVYGNII.

This sequence belongs to the glycosyltransferase 51 family.

It localises to the cell inner membrane. The catalysed reaction is [GlcNAc-(1-&gt;4)-Mur2Ac(oyl-L-Ala-gamma-D-Glu-L-Lys-D-Ala-D-Ala)](n)-di-trans,octa-cis-undecaprenyl diphosphate + beta-D-GlcNAc-(1-&gt;4)-Mur2Ac(oyl-L-Ala-gamma-D-Glu-L-Lys-D-Ala-D-Ala)-di-trans,octa-cis-undecaprenyl diphosphate = [GlcNAc-(1-&gt;4)-Mur2Ac(oyl-L-Ala-gamma-D-Glu-L-Lys-D-Ala-D-Ala)](n+1)-di-trans,octa-cis-undecaprenyl diphosphate + di-trans,octa-cis-undecaprenyl diphosphate + H(+). It participates in cell wall biogenesis; peptidoglycan biosynthesis. Functionally, peptidoglycan polymerase that catalyzes glycan chain elongation from lipid-linked precursors. The sequence is that of Biosynthetic peptidoglycan transglycosylase from Neisseria meningitidis serogroup C / serotype 2a (strain ATCC 700532 / DSM 15464 / FAM18).